The primary structure comprises 290 residues: Glutaredoxin domain-containing cysteine-rich protein 1 (290 aa).

Residues 127–234 (LQQPSTDLEF…DILTKIERVQ (108 aa)) enclose the Glutaredoxin domain.

The protein belongs to the GRXCR1 family. In terms of tissue distribution, expressed at low levels in adult lung, brain and duodenum with moderate levels in testis. Highly expressed in fetal cochlea.

It localises to the cell projection. It is found in the stereocilium. Its subcellular location is the microvillus. The protein resides in the kinocilium. In terms of biological role, may play a role in actin filament architecture in developing stereocilia of sensory cells. The chain is Glutaredoxin domain-containing cysteine-rich protein 1 (GRXCR1) from Homo sapiens (Human).